We begin with the raw amino-acid sequence, 344 residues long: Ureide permease 3 (344 aa).

At 1–10 (MYVIESKGGT) the chain is on the extracellular side. Residues 11 to 31 (ITCMLLALLFLGTWPAIMTLT) form a helical membrane-spanning segment. The Cytoplasmic segment spans residues 32 to 42 (ERRGRLPQHTY). The helical transmembrane segment at 43 to 63 (LDYTLTNLLAAVIIAFTLGEI) threads the bilayer. The Extracellular segment spans residues 64–78 (SPSRPNFTTQLSQDN). A helical membrane pass occupies residues 79–99 (WPSVMFAMAGGIFLSLGTLAT). Over 100–101 (QY) the chain is Cytoplasmic. A helical transmembrane segment spans residues 102 to 122 (AWAFVGLSVTEVITASIAVVI). At 123-136 (GTTLNYFLDDRINR) the chain is on the extracellular side. Residues 137-157 (AEVLFPGVACFLIAVCFGSAV) form a helical membrane-spanning segment. The Cytoplasmic segment spans residues 158 to 208 (HKSNAADNKSKLQGFKSLETTSSFQMETSSIKEGKAKVGTADFLIEVEKQR). 209-216 (AIKVFGKS) provides a ligand contact to ATP. The helical transmembrane segment at 209-229 (AIKVFGKSTIIGLAITFFAVP) threads the bilayer. Topologically, residues 230-235 (KLNVYT) are extracellular. A helical transmembrane segment spans residues 236 to 256 (AFFYFSISSFGVGLILNIIFL). Topologically, residues 257–278 (YWPILGLPRSSFKAYLNDWNGR) are cytoplasmic. The chain crosses the membrane as a helical span at residues 279-299 (GWSFLAGFLCGFGNGLQFMGG). Residues 300–344 (QAAGYAAAGAVQIENKHFGGYCCLENTKDHQEKHIHFLSVCYLCS) lie on the Extracellular side of the membrane.

Belongs to the plant ureide permease (TC 2.A.7.19) family.

The protein resides in the membrane. Proton-coupled transporter that transports a wide spectrum of oxo derivatives of heterocyclic nitrogen compounds. The chain is Ureide permease 3 from Arabidopsis thaliana (Mouse-ear cress).